A 417-amino-acid chain; its full sequence is Serine hydroxymethyltransferase (417 aa).

Residues Leu-120 and 124-126 contribute to the (6S)-5,6,7,8-tetrahydrofolate site; that span reads GHL. The residue at position 229 (Lys-229) is an N6-(pyridoxal phosphate)lysine. Position 354 to 356 (354 to 356) interacts with (6S)-5,6,7,8-tetrahydrofolate; that stretch reads SPF.

This sequence belongs to the SHMT family. As to quaternary structure, homodimer. The cofactor is pyridoxal 5'-phosphate.

It is found in the cytoplasm. The catalysed reaction is (6R)-5,10-methylene-5,6,7,8-tetrahydrofolate + glycine + H2O = (6S)-5,6,7,8-tetrahydrofolate + L-serine. Its pathway is one-carbon metabolism; tetrahydrofolate interconversion. It participates in amino-acid biosynthesis; glycine biosynthesis; glycine from L-serine: step 1/1. Functionally, catalyzes the reversible interconversion of serine and glycine with tetrahydrofolate (THF) serving as the one-carbon carrier. This reaction serves as the major source of one-carbon groups required for the biosynthesis of purines, thymidylate, methionine, and other important biomolecules. Also exhibits THF-independent aldolase activity toward beta-hydroxyamino acids, producing glycine and aldehydes, via a retro-aldol mechanism. The protein is Serine hydroxymethyltransferase of Acinetobacter radioresistens.